The chain runs to 208 residues: 3-isopropylmalate dehydratase small subunit 2 (208 aa).

The protein belongs to the LeuD family. LeuD type 1 subfamily. As to quaternary structure, heterodimer of LeuC and LeuD.

The catalysed reaction is (2R,3S)-3-isopropylmalate = (2S)-2-isopropylmalate. Its pathway is amino-acid biosynthesis; L-leucine biosynthesis; L-leucine from 3-methyl-2-oxobutanoate: step 2/4. In terms of biological role, catalyzes the isomerization between 2-isopropylmalate and 3-isopropylmalate, via the formation of 2-isopropylmaleate. This Salmonella typhimurium (strain LT2 / SGSC1412 / ATCC 700720) protein is 3-isopropylmalate dehydratase small subunit 2 (leuD2).